We begin with the raw amino-acid sequence, 125 residues long: Small ribosomal subunit protein bS6 (125 aa).

Positions 99–125 (PSIMMKSVEREEARKASTEASAPAQAQ) are disordered. Residues 105–115 (SVEREEARKAS) show a composition bias toward basic and acidic residues. Positions 116-125 (TEASAPAQAQ) are enriched in polar residues.

It belongs to the bacterial ribosomal protein bS6 family.

Functionally, binds together with bS18 to 16S ribosomal RNA. This chain is Small ribosomal subunit protein bS6, found in Bordetella petrii (strain ATCC BAA-461 / DSM 12804 / CCUG 43448).